A 307-amino-acid chain; its full sequence is Methionyl-tRNA formyltransferase (307 aa).

A (6S)-5,6,7,8-tetrahydrofolate-binding site is contributed by 108-111; it reads SLLP.

Belongs to the Fmt family.

The enzyme catalyses L-methionyl-tRNA(fMet) + (6R)-10-formyltetrahydrofolate = N-formyl-L-methionyl-tRNA(fMet) + (6S)-5,6,7,8-tetrahydrofolate + H(+). Functionally, attaches a formyl group to the free amino group of methionyl-tRNA(fMet). The formyl group appears to play a dual role in the initiator identity of N-formylmethionyl-tRNA by promoting its recognition by IF2 and preventing the misappropriation of this tRNA by the elongation apparatus. In Xylella fastidiosa (strain M12), this protein is Methionyl-tRNA formyltransferase.